The sequence spans 273 residues: MTKDIMDAVFIKEMAKTTSNLYRLGWDERNGGNITYLLDEKEVVEYLDVKQIIRTIPMDFDGKKLAGKYFLVTGSGKYFKNVEEAPAVNLGVIQVSEDGKAVHLLWGYTDGGLPTSELPAHFMSHIARLSVDPENRVVMHCHATHLLAMTFTHELTEREFTRTLWQMCTECLVVFPEGVGIIPWLVPGTNEIGEATSEKMKENRLIVWPHHGIYGAGKSMDETFGLIETAEKAAEVYTIVMSQGGIKQAITDEQLKALGERFGVEAKAGYLNN.

The active site involves E117. The Zn(2+) site is built by H140, H142, and H211.

It belongs to the aldolase class II family. RhaD subfamily. It depends on Zn(2+) as a cofactor.

It localises to the cytoplasm. The catalysed reaction is L-rhamnulose 1-phosphate = (S)-lactaldehyde + dihydroxyacetone phosphate. It participates in carbohydrate degradation; L-rhamnose degradation; glycerone phosphate from L-rhamnose: step 3/3. Catalyzes the reversible cleavage of L-rhamnulose-1-phosphate to dihydroxyacetone phosphate (DHAP) and L-lactaldehyde. The chain is Rhamnulose-1-phosphate aldolase from Listeria monocytogenes serotype 4b (strain CLIP80459).